We begin with the raw amino-acid sequence, 274 residues long: Large ribosomal subunit protein uL2cz/uL2cy (274 aa).

Disordered regions lie at residues Met1–Asn25 and Met223–Lys274.

The protein belongs to the universal ribosomal protein uL2 family. As to quaternary structure, part of the 50S ribosomal subunit.

The protein resides in the plastid. It is found in the chloroplast. The polypeptide is Large ribosomal subunit protein uL2cz/uL2cy (rpl2-A) (Citrus sinensis (Sweet orange)).